Here is a 645-residue protein sequence, read N- to C-terminus: Acetyl-coenzyme A synthetase (645 aa).

CoA is bound by residues 190–193 (RGGR) and Thr308. ATP contacts are provided by residues 384–386 (GEP), 408–413 (DTWWQT), Asp497, and Arg512. Residue Ser520 coordinates CoA. Arg523 contacts ATP. Mg(2+)-binding residues include Val534, His536, and Val539. Lys606 carries the post-translational modification N6-acetyllysine.

The protein belongs to the ATP-dependent AMP-binding enzyme family. Requires Mg(2+) as cofactor. Post-translationally, acetylated. Deacetylation by the SIR2-homolog deacetylase activates the enzyme.

It catalyses the reaction acetate + ATP + CoA = acetyl-CoA + AMP + diphosphate. Functionally, catalyzes the conversion of acetate into acetyl-CoA (AcCoA), an essential intermediate at the junction of anabolic and catabolic pathways. AcsA undergoes a two-step reaction. In the first half reaction, AcsA combines acetate with ATP to form acetyl-adenylate (AcAMP) intermediate. In the second half reaction, it can then transfer the acetyl group from AcAMP to the sulfhydryl group of CoA, forming the product AcCoA. The chain is Acetyl-coenzyme A synthetase from Halorhodospira halophila (strain DSM 244 / SL1) (Ectothiorhodospira halophila (strain DSM 244 / SL1)).